Consider the following 355-residue polypeptide: Glutamine synthetase root isozyme 4 (355 aa).

One can recognise a GS beta-grasp domain in the interval 19 to 99 (IIAEYIWIGG…VMCDCYTPAG (81 aa)). The disordered stretch occupies residues 37 to 66 (ARTLPGPVTDPSKLPKWNYDGSSTGQAPGE). The GS catalytic domain maps to 106–355 (KRYSAAKIFS…IAETTIVWKP (250 aa)).

This sequence belongs to the glutamine synthetase family. As to quaternary structure, homooctamer. Found in all the tissues examined with higher expression found in tissues of the root, stem and seedling shoot.

Its subcellular location is the cytoplasm. The enzyme catalyses L-glutamate + NH4(+) + ATP = L-glutamine + ADP + phosphate + H(+). Its function is as follows. Plays a role in the flow of nitrogen into nitrogenous organic compounds. The chain is Glutamine synthetase root isozyme 4 (GLN5) from Zea mays (Maize).